The following is a 427-amino-acid chain: Serine hydroxymethyltransferase (427 aa).

(6S)-5,6,7,8-tetrahydrofolate is bound at residue G120–I122. K226 is subject to N6-(pyridoxal phosphate)lysine.

Belongs to the SHMT family. In terms of assembly, homodimer. Pyridoxal 5'-phosphate serves as cofactor.

The protein localises to the cytoplasm. It functions in the pathway amino-acid biosynthesis; glycine biosynthesis; glycine from L-serine: step 1/1. In terms of biological role, catalyzes the reversible interconversion of serine and glycine with a modified folate serving as the one-carbon carrier. Also exhibits a pteridine-independent aldolase activity toward beta-hydroxyamino acids, producing glycine and aldehydes, via a retro-aldol mechanism. The chain is Serine hydroxymethyltransferase from Pyrococcus furiosus (strain ATCC 43587 / DSM 3638 / JCM 8422 / Vc1).